The sequence spans 342 residues: Phenylalanine--tRNA ligase alpha subunit (342 aa).

E255 serves as a coordination point for Mg(2+).

This sequence belongs to the class-II aminoacyl-tRNA synthetase family. Phe-tRNA synthetase alpha subunit type 1 subfamily. Tetramer of two alpha and two beta subunits. Mg(2+) is required as a cofactor.

The protein resides in the cytoplasm. It catalyses the reaction tRNA(Phe) + L-phenylalanine + ATP = L-phenylalanyl-tRNA(Phe) + AMP + diphosphate + H(+). This chain is Phenylalanine--tRNA ligase alpha subunit, found in Pelotomaculum thermopropionicum (strain DSM 13744 / JCM 10971 / SI).